The following is a 955-amino-acid chain: Translation initiation factor IF-2 (955 aa).

The disordered stretch occupies residues 49 to 352; it reads AFSQSSESTE…QAPSFGGVKI (304 aa). Low complexity predominate over residues 77–88; it reads PQQQTKASAPSA. Pro residues-rich tracts occupy residues 95-121, 149-159, 188-202, and 209-223; these read PAVP…PGPR, RPVPKPGPRPG, RPGP…PPRP, and PPRP…PRPG. A compositionally biased stretch (gly residues) spans 225 to 235; that stretch reads GTAGGRPGSSA. A compositionally biased stretch (pro residues) spans 238 to 264; sequence PPRPVPRPGPRPSPMNMPASRPTPPGG. The segment covering 273–322 has biased composition (gly residues); it reads SGGGRGRGGGGGAGPRGGGAGGGAPRTGFGGRPGGGRGRGGTAGAFGRPG. Residues 326-335 are compositionally biased toward basic residues; it reads SRSRKSKKQR. Residues 448-620 enclose the tr-type G domain; that stretch reads PRAPVVTVMG…IILTADAELD (173 aa). Positions 457–464 are G1; that stretch reads GHVDHGKT. 457–464 is a GTP binding site; that stretch reads GHVDHGKT. Positions 482–486 are G2; the sequence is GITQH. The interval 507-510 is G3; the sequence is DTPG. GTP contacts are provided by residues 507–511 and 561–564; these read DTPGH and NKID. The interval 561 to 564 is G4; that stretch reads NKID. Positions 597-599 are G5; sequence SAK.

The protein belongs to the TRAFAC class translation factor GTPase superfamily. Classic translation factor GTPase family. IF-2 subfamily.

Its subcellular location is the cytoplasm. In terms of biological role, one of the essential components for the initiation of protein synthesis. Protects formylmethionyl-tRNA from spontaneous hydrolysis and promotes its binding to the 30S ribosomal subunits. Also involved in the hydrolysis of GTP during the formation of the 70S ribosomal complex. The sequence is that of Translation initiation factor IF-2 from Thermobifida fusca (strain YX).